The sequence spans 233 residues: 7-cyano-7-deazaguanine synthase (233 aa).

7 to 17 serves as a coordination point for ATP; the sequence is LSGGLDSAVTS. Residues Cys-195, Cys-206, Cys-209, and Cys-212 each contribute to the Zn(2+) site.

The protein belongs to the QueC family. Zn(2+) is required as a cofactor.

It catalyses the reaction 7-carboxy-7-deazaguanine + NH4(+) + ATP = 7-cyano-7-deazaguanine + ADP + phosphate + H2O + H(+). It functions in the pathway purine metabolism; 7-cyano-7-deazaguanine biosynthesis. Catalyzes the ATP-dependent conversion of 7-carboxy-7-deazaguanine (CDG) to 7-cyano-7-deazaguanine (preQ(0)). This chain is 7-cyano-7-deazaguanine synthase, found in Methanococcus maripaludis (strain C6 / ATCC BAA-1332).